Consider the following 170-residue polypeptide: Ribosome maturation factor RimP (170 aa).

The protein belongs to the RimP family.

The protein localises to the cytoplasm. Functionally, required for maturation of 30S ribosomal subunits. This Acidothermus cellulolyticus (strain ATCC 43068 / DSM 8971 / 11B) protein is Ribosome maturation factor RimP.